A 757-amino-acid chain; its full sequence is DNA endonuclease RBBP8 (757 aa).

An essential for binding to the MRN complex and for RPA focus formation on DNA damage region spans residues 22-45 (DLWTKLKEYHDKETQGLQVKVTKL). Residues 35–84 (TQGLQVKVTKLKKERILDAQRLEEFFTKNQQLREQQKVLHETIKVLEDRL) are a coiled coil. The tract at residues 45–160 (LKKERILDAQ…TDLESEEDVI (116 aa)) is required for interaction with LMO4, probably by stabilizing the interaction through RPPB8 dimerization. Residues Lys62 and Lys115 each participate in a glycyl lysine isopeptide (Lys-Gly) (interchain with G-Cter in SUMO2) cross-link. The stretch at 117 to 138 (ITELMNEKNTLQEENKKLSEQL) forms a coiled coil. Lys193 participates in a covalent cross-link: Glycyl lysine isopeptide (Lys-Gly) (interchain with G-Cter in SUMO2). Ser272 bears the Phosphoserine mark. Thr309 bears the Phosphothreonine mark. Residues Ser320, Ser321, and Ser343 each carry the phosphoserine modification. Residues 348-375 (GKKTHLKTVPLSNTSAPGPEKPRSKSED) are disordered. Glycyl lysine isopeptide (Lys-Gly) (interchain with G-Cter in SUMO2) cross-links involve residues Lys354 and Lys372. The residue at position 373 (Ser373) is a Phosphoserine. Residues Lys390, Lys399, and Lys405 each participate in a glycyl lysine isopeptide (Lys-Gly) (interchain with G-Cter in SUMO2) cross-link. The segment covering 407-417 (TSEPISEQGNI) has biased composition (polar residues). Residues 407–430 (TSEPISEQGNIGHSKDTDRDKHVV) form a disordered region. The span at 419-429 (HSKDTDRDKHV) shows a compositional bias: basic and acidic residues. Residues Lys433 and Lys443 each participate in a glycyl lysine isopeptide (Lys-Gly) (interchain with G-Cter in SUMO2) cross-link. Positions 484–488 (PLDLS) are PXDLS motif. The short motif at 484–488 (PLDLS) is the PXDLS motif element. The interval 503–551 (CENSKIRFRQVTLYEALKPIPRDSSSSRKALSGSCGLTKDSPEEPCLQE) is damage-recruitment motif. Lys520 participates in a covalent cross-link: Glycyl lysine isopeptide (Lys-Gly) (interchain with G-Cter in SUMO2); alternate. The disordered stretch occupies residues 524-544 (RDSSSSRKALSGSCGLTKDSP). Residues Lys564 and Lys570 each participate in a glycyl lysine isopeptide (Lys-Gly) (interchain with G-Cter in SUMO2) cross-link. A Glycyl lysine isopeptide (Lys-Gly) (interchain with G-Cter in SUMO2); alternate cross-link involves residue Lys596. Glycyl lysine isopeptide (Lys-Gly) (interchain with G-Cter in SUMO2) cross-links involve residues Lys605, Lys630, and Lys632. The required for interaction with LMO4, probably by making physical contact with LMO4 stretch occupies residues 633–677 (SLQNNQDVSFENIQWSIDPGADLSQYKMGVTVDDTKDGSQSRLAG). At Ser656 the chain carries Phosphoserine; by ATM. Lys668 participates in a covalent cross-link: Glycyl lysine isopeptide (Lys-Gly) (interchain with G-Cter in SUMO2). Ser671 bears the Phosphoserine mark. Residues 696–728 (KKQEQKGEESPNGERKMNDSLEDMFDRTTHEEY) show a composition bias toward basic and acidic residues. The tract at residues 696 to 757 (KKQEQKGEES…TTTKKPNISW (62 aa)) is disordered. Lys711 participates in a covalent cross-link: Glycyl lysine isopeptide (Lys-Gly) (interchain with G-Cter in SUMO2). Ser715 bears the Phosphoserine mark. The span at 747 to 757 (STTTKKPNISW) shows a compositional bias: polar residues.

Belongs to the COM1/SAE2/CtIP family. In terms of assembly, homotetramer; formed by antiparallel association of helical extensions protruding from the N-termini of two parallel coiled-coil dimers. Forms a dumbbell-shaped particle in which polar globular domains are held about 30 nm apart by a central rod. Homotetramerization is required for DNA-end resection and repair. Interacts (via the PXDLS motif) with CTBP1; the interaction is disrupted via binding of the adenovirus E1A to CTBP1. Component of the BRCA1-RBBP8 complex. Interacts (the Ser-321 phosphorylated form) with BRCA1 (via the C-terminal BRCT domains): the interaction occurs in the G2 phase, ubiquitinates RBBP8 and involves RBBP8 in BRCA1-dependent G2/M checkpoint control on DNA damage. Interacts with RB1. Interacts with the MRN complex. Interacts directly with MRE11; the interaction is required for efficient homologous recombination (HR) and regulation of the MRN complex. Interacts directly with RAD50. Interacts (when phosphorylated by CDK1) with NBN; promoting association with the MRN complex. Interacts with LMO4 (via the LIM zinc-binding 1 domain). Interacts with SIAH1. Interacts with RNF138. Interacts with EXD2. Interacts with CUL3 and KLHL15; this interaction leads to RBBP8 proteasomal degradation. Directly interacts with PIN1; this interaction depends upon RBBP8 phosphorylation, predominantly at Thr-309. Interacts with FZR1; this interaction leads to APC/C-mediated RBBP8 proteasomal degradation. Interacts with AUNIP; leading to recruit RBBP8 to sites of DNA damage. Interacts with SAMHD1. Interacts with HDGFL2. Post-translationally, hyperphosphorylation upon ionizing radiation results in dissociation from BRCA1. Phosphorylation by CDK1 is essential for the recruitment to DNA and the DNA repair function. Phosphorylated on Ser-321 as cells enter G2 phase. This phosphorylation is required for binding BRCA1 and for the G2/M DNA damage transition checkpoint control. Phosphorylation at Thr-309, probably catalyzed by CDK2, is required for PIN1-binding, while phosphorylation at Ser-272 serves as a PIN1 isomerization site. Phosphorylation at Thr-309 is cell-cycle dependent. It steadily increases during S phase, peaks at late S/G2 phase, and drops at G1. Phosphorylation is not required for tetramerization. Binds to DNA more strongly when dephosphorylated. Ubiquitinated. Ubiquitination at multiple sites by BRCA1 (via its N-terminal RING domain) does not lead to its proteasomal degradation but instead the ubiquitinated RBBP8 binds to chromatin following DNA damage and may play a role in G2/M checkpoint control. Ubiquitinated by RNF138 at its N-terminus. Ubiquitinated through 'Lys-48' by the E3 CUL3-KLHL15 complex; this modification leads to proteasomal degradation. Ubiquitinated by the E3 FZR1/APC/C complex; this modification leads to proteasomal degradation.

It localises to the nucleus. The protein localises to the chromosome. Endonuclease that cooperates with the MRE11-RAD50-NBN (MRN) complex in DNA-end resection, the first step of double-strand break (DSB) repair through the homologous recombination (HR) pathway. HR is restricted to S and G2 phases of the cell cycle and preferentially repairs DSBs resulting from replication fork collapse. Key determinant of DSB repair pathway choice, as it commits cells to HR by preventing classical non-homologous end-joining (NHEJ). Specifically promotes the endonuclease activity of the MRN complex to clear DNA ends containing protein adducts: recruited to DSBs by NBN following phosphorylation by CDK1, and promotes the endonuclease activity of MRE11 to clear protein-DNA adducts and generate clean double-strand break ends. Functions downstream of the MRN complex and ATM, promotes ATR activation and its recruitment to DSBs in the S/G2 phase facilitating the generation of ssDNA. Component of the BRCA1-RBBP8 complex that regulates CHEK1 activation and controls cell cycle G2/M checkpoints on DNA damage. During immunoglobulin heavy chain class-switch recombination, promotes microhomology-mediated alternative end joining (A-NHEJ) and plays an essential role in chromosomal translocations. Binds preferentially to DNA Y-junctions and to DNA substrates with blocked ends and promotes intermolecular DNA bridging. In Bos taurus (Bovine), this protein is DNA endonuclease RBBP8 (RBBP8).